We begin with the raw amino-acid sequence, 381 residues long: MKLIRKYHMIPYENGSEYESAKRFLENILSASDVDPTTKCRFYQDVLYRIRNHPELPIVTEELFDVVQENLQQQNDNQKRNVKLERRNLKYEVIPEKRESYQEKDYTNPPVYKAENEQLFDDVPYRNDGINHLKPRKNVYIKEEPEDEDYHMEYEKIPEINMEQNVNELFTEPQKHAAGKIKKSKNQKKDGTLSRPLGKKENKSVVKVKIEEPDQDMQAAPPRKPEEKNEETAPVSIKKRSFQQDATSNKRQKFDLKRGKSMNNVKPRKLYKMQLDEEDEDEEPMVDETPQNTEISIKKRPFQQDSTKNLNKRQKFDLKRRKNMSRVRPNKIYKMQNLKRNISSTIPDNGTNIPAAKRRVLRGSGSAPPPGSRVYCRLWKF.

Residues 176–292 (HAAGKIKKSK…EPMVDETPQN (117 aa)) are disordered. Positions 177–186 (AAGKIKKSKN) are enriched in basic residues. The span at 187–212 (QKKDGTLSRPLGKKENKSVVKVKIEE) shows a compositional bias: basic and acidic residues. Over residues 276 to 286 (DEEDEDEEPMV) the composition is skewed to acidic residues.

This is an uncharacterized protein from Caenorhabditis elegans.